Reading from the N-terminus, the 477-residue chain is Cysteine--tRNA ligase (477 aa).

Residue C34 coordinates Zn(2+). The 'HIGH' region motif lies at 36–46 (PTVYDFAHIGN). 3 residues coordinate Zn(2+): C235, H260, and E264. The short motif at 293–297 (KMSKS) is the 'KMSKS' region element. K296 lines the ATP pocket.

Belongs to the class-I aminoacyl-tRNA synthetase family. As to quaternary structure, monomer. Requires Zn(2+) as cofactor.

It localises to the cytoplasm. It catalyses the reaction tRNA(Cys) + L-cysteine + ATP = L-cysteinyl-tRNA(Cys) + AMP + diphosphate. In Mesorhizobium japonicum (strain LMG 29417 / CECT 9101 / MAFF 303099) (Mesorhizobium loti (strain MAFF 303099)), this protein is Cysteine--tRNA ligase.